Consider the following 147-residue polypeptide: Ubiquitin-conjugating enzyme E2-16 kDa (147 aa).

Positions 1 to 147 (MAFKRINKEL…AREWTRKYAI (147 aa)) constitute a UBC core domain. The Glycyl thioester intermediate role is filled by cysteine 107.

It belongs to the ubiquitin-conjugating enzyme family.

It catalyses the reaction S-ubiquitinyl-[E1 ubiquitin-activating enzyme]-L-cysteine + [E2 ubiquitin-conjugating enzyme]-L-cysteine = [E1 ubiquitin-activating enzyme]-L-cysteine + S-ubiquitinyl-[E2 ubiquitin-conjugating enzyme]-L-cysteine.. The protein operates within protein modification; protein ubiquitination. Its function is as follows. Catalyzes the covalent attachment of ubiquitin to other proteins. May also mediate selective proteolysis pathways. This chain is Ubiquitin-conjugating enzyme E2-16 kDa (UBC1), found in Colletotrichum gloeosporioides (Anthracnose fungus).